Here is a 1488-residue protein sequence, read N- to C-terminus: Calmodulin binding protein PICBP (1488 aa).

Disordered stretches follow at residues 1 to 31 (MSNP…RKMW), 63 to 112 (TAES…SRIS), 280 to 329 (GPLG…GRSS), and 378 to 414 (HDHD…EEDG). Residues 18 to 31 (SSRRVHKRRERKMW) show a composition bias toward basic residues. The segment covering 76-86 (DDSRTYSKSSD) has biased composition (basic and acidic residues). Positions 98-107 (SVKRRAKSKS) are enriched in basic residues. Positions 297–312 (DNVDGDSDEEVFEEEV) are enriched in acidic residues. 2 calmodulin-binding regions span residues 493–592 (TFHM…SLIP) and 831–938 (NSLK…DIVL). Disordered stretches follow at residues 816-844 (IPDS…GETK) and 941-971 (HDTP…EGCE). 2 stretches are compositionally biased toward basic and acidic residues: residues 833–844 (LKEEKEHQGETK) and 954–971 (RNND…EGCE). The segment at 1135-1229 (EKRVKGWNNV…SLLAQAFDTI (95 aa)) is calmodulin-binding. 2 disordered regions span residues 1232–1252 (QDMG…ISRQ) and 1316–1340 (EKNQ…DTSV). Positions 1235 to 1252 (GSGSTPGSAASSRNISRQ) are enriched in low complexity. Over residues 1316 to 1328 (EKNQTLPEETRKE) the composition is skewed to basic and acidic residues. Residues 1379–1483 (RQKSETLQVS…QLLVQAFESL (105 aa)) are calmodulin-binding.

In terms of biological role, binds calmodulin in a calcium-dependent manner in vitro. May play a role in general plant defense including R gene-mediated responses. The chain is Calmodulin binding protein PICBP from Arabidopsis thaliana (Mouse-ear cress).